A 215-amino-acid chain; its full sequence is Probable transaldolase (215 aa).

Residue K83 is the Schiff-base intermediate with substrate of the active site.

This sequence belongs to the transaldolase family. Type 3B subfamily.

Its subcellular location is the cytoplasm. It catalyses the reaction D-sedoheptulose 7-phosphate + D-glyceraldehyde 3-phosphate = D-erythrose 4-phosphate + beta-D-fructose 6-phosphate. The protein operates within carbohydrate degradation; pentose phosphate pathway; D-glyceraldehyde 3-phosphate and beta-D-fructose 6-phosphate from D-ribose 5-phosphate and D-xylulose 5-phosphate (non-oxidative stage): step 2/3. Transaldolase is important for the balance of metabolites in the pentose-phosphate pathway. This is Probable transaldolase from Moorella thermoacetica (strain ATCC 39073 / JCM 9320).